A 1475-amino-acid chain; its full sequence is Sex-determining transformer protein 2 (1475 aa).

Positions 1-31 are cleaved as a signal peptide; that stretch reads MKLKYNKLLVSVVIVTFVTFGLLLAECFGKS. 11 helical membrane-spanning segments follow: residues 446 to 466, 474 to 494, 496 to 516, 589 to 609, 737 to 757, 902 to 922, 928 to 948, 952 to 972, 979 to 999, 1034 to 1054, and 1060 to 1080; these read TIHF…IFVW, AFMF…VCST, GVIV…LANL, WGCT…FIDS, GVIL…LLFI, AVGV…LFAF, AGIF…TPTI, FLFS…VHLF, IYTN…FCAL, IAQF…ICSI, and IFFV…FNSI. The interaction with fem-3 stretch occupies residues 1133–1273; it reads EFSIKRSSPP…RERNLMNKRS (141 aa). Disordered regions lie at residues 1142-1194 and 1267-1330; these read PCRY…GDNT and NLMN…VDEP. A compositionally biased stretch (basic residues) spans 1178 to 1188; the sequence is RSPKTGNKRVR. Residues 1276 to 1310 show a composition bias toward basic and acidic residues; that stretch reads QRRESRNIEKMKKSQENLDKEKSEEKISESKKNQD. The segment at 1392–1413 is MX regulatory domain; required for tra-1 binding; sequence CEDIYWTHRTGQLPPGLQVPRR. A disordered region spans residues 1424 to 1475; the sequence is TPPPEDLNWVPPAESPPIPIPQQAFDLLEERRRNHREQQDEAREGDLSDPEV. Residues 1451-1469 show a composition bias toward basic and acidic residues; the sequence is LEERRRNHREQQDEAREGD.

In terms of assembly, interacts with tra-1 and fem-3. In terms of processing, undergoes cleavage by tra-3 to produce a feminizing carboxy-terminal isoform Tra-2B. Somatic and germline tissues. Isoform Tra-2B is specific to oocytes.

It localises to the membrane. Functionally, plays a major role in controlling sexual cell fates. Promotes female development in XX animals where it sequesters one or more of the FEM proteins to the membrane thereby freeing the tra-1 protein (a putative transcription factor) to enter the nucleus and promote female development. In XO animals it acts as a receptor for her-1 which prevents it from binding to FEM proteins thereby repressing the activity of tra-1. Negatively regulates male development when bound to fem-3 and is required together with tra-1 for promoting spermatogenesis. Also required for feminizing tra-3 activity. The sequence is that of Sex-determining transformer protein 2 (tra-2) from Caenorhabditis elegans.